A 443-amino-acid chain; its full sequence is Regulator of rDNA transcription protein 5 (443 aa).

Residues 4 to 87 (SRIYIANVSY…RVLRVRTHNP (84 aa)) enclose the RRM 1 domain. Residues 112–140 (EDTAASGERAPTDAQDHPDQPQEGHMSPD) are disordered. Over residues 121 to 133 (APTDAQDHPDQPQ) the composition is skewed to basic and acidic residues. In terms of domain architecture, RRM 2 spans 183–268 (DTVYCAFLPK…TKISIKPAYI (86 aa)). A disordered region spans residues 408-443 (GMTKQSVGSNKKKNKKKKSARGKEVRKLSVSNTTTQ). Over residues 417-427 (NKKKNKKKKSA) the composition is skewed to basic residues.

The protein belongs to the RRT5 family.

Functionally, may be involved in the modulation of rDNA transcription. The protein is Regulator of rDNA transcription protein 5 (RRT5) of Candida glabrata (strain ATCC 2001 / BCRC 20586 / JCM 3761 / NBRC 0622 / NRRL Y-65 / CBS 138) (Yeast).